Here is a 1257-residue protein sequence, read N- to C-terminus: Period circadian protein homolog 2 (1257 aa).

Positions Met1 to Gly59 are disordered. Over residues Ser8 to Gln25 the composition is skewed to low complexity. Residues Ser35–Ser53 are compositionally biased toward polar residues. The Nuclear export signal 1 signature appears at Leu109–Val118. The PAS 1 domain occupies Ile179–Leu246. The LXXLL signature appears at Leu306 to Leu310. The PAS 2 domain maps to Tyr319–Gln385. The PAC domain occupies Tyr393–Pro436. A Nuclear export signal 2 motif is present at residues Leu460 to Met469. Residues Pro471–Lys567 form a disordered region. The tract at residues Ser478–Ser482 is important for protein stability. 2 stretches are compositionally biased toward polar residues: residues Met493–Gln504 and Ser518–Ser528. The interval Arg510–Lys709 is CSNK1E binding domain. Ser525, Ser528, Ser531, Ser538, and Ser544 each carry phosphoserine. Over residues Glu541–Thr555 the composition is skewed to polar residues. Thr554 carries the phosphothreonine modification. Residues Ser659, Ser693, Ser697, Ser706, Ser758, and Ser763 each carry the phosphoserine modification. Disordered regions lie at residues Asp678–Ser706 and Arg757–Ala833. The Nuclear localization signal motif lies at Lys778–Arg794. The span at Lys779 to Lys792 shows a compositional bias: basic residues. Low complexity predominate over residues Ser821–Ser832. At Thr858 the chain carries Phosphothreonine. The interaction with PPARG stretch occupies residues Glu882–Leu1067. The residue at position 939 (Ser939) is a Phosphoserine. A Phosphothreonine modification is found at Thr964. Residue Ser971 is modified to Phosphoserine. A Nuclear export signal 3 motif is present at residues Leu983 to Leu990. The disordered stretch occupies residues Ala993–Ile1044. The segment covering Ser996–Leu1014 has biased composition (low complexity). Residues Ser1033–Ile1044 show a composition bias toward polar residues. The LXXLL signature appears at Leu1051 to Leu1055. Low complexity predominate over residues Ser1070 to Ser1089. A disordered region spans residues Ser1070–Ile1108. Positions Arg1090–Ile1108 are enriched in polar residues. Phosphoserine is present on Ser1126. A CRY binding domain region spans residues Ser1157–Thr1257. A disordered region spans residues Glu1226–Thr1257.

Homodimer. Component of the circadian core oscillator, which includes the CRY proteins, CLOCK or NPAS2, BMAL1 or BMAL2, CSNK1D and/or CSNK1E, TIMELESS, and the PER proteins. Interacts with CLOCK-BMAL1 (off DNA). Interacts directly with PER1 and PER3, and through a C-terminal domain, with CRY1 and CRY2. Interacts (via PAS 2 domain) with TIMELESS. Interacts with NFIL3. Different large complexes have been identified with different repressive functions. The core of PER complexes is composed of at least PER1, PER2, PER3, CRY1, CRY2, CSNK1D and/or CSNK1E. The large PER complex involved in the repression of transcriptional termination is composed of at least PER2, CDK9, DDX5, DHX9, NCBP1 and POLR2A (active). The large PER complex involved in the histone deacetylation is composed of at least HDAC1, PER2, SFPQ and SIN3A. The large PER complex involved in the histone methylation is composed of at least PER2, CBX3, TRIM28, SUV39H1 and/or SUV39H2; CBX3 mediates the formation of the complex. Interacts with SETX; the interaction inhibits termination of circadian target genes. Interacts with the nuclear receptors HNF4A, NR1D1, NR4A2, RORA, PPARA, PPARG and THRA; the interaction with at least PPARG is ligand dependent. Interacts with PML. Interacts (phosphorylated) with BTRC and FBXW11; the interactions trigger proteasomal degradation. Interacts with NONO and SFPQ. Interacts with CAVIN3. Interacts with MAGEL2. Interacts with MAP1LC3B. Interacts with HNF4A. Acetylated. Deacetylated by SIRT1, resulting in decreased protein stability. Deacetylated by SIRT6, preventing its degradation by the proteasome, resulting in increased protein stability. Post-translationally, phosphorylated by CSNK1E and CSNK1D. Phosphorylation results in PER2 protein degradation. May be dephosphorylated by PP1. In terms of processing, ubiquitinated, leading to its proteasomal degradation. Ubiquitination may be inhibited by CRY1. As to expression, expressed in all tissues examined including eye, brain, heart, lung, spleen, liver, pancreas and kidney. In the CNS, highly expressed in the SCN, internal granular layer of granular cells of the olfactory bulb, tuberculum olfactorium, piriform cortex, gyrus dentatus of the hippocampus, cerebellum, pars tuberalis/median eminence, and pituitary, and moderately in the tenia tecta, caudate putamen, accumbens nucleus, superior and inferior colliculus and pineal gland.

Its subcellular location is the nucleus. It localises to the cytoplasm. It is found in the perinuclear region. Transcriptional repressor which forms a core component of the circadian clock. The circadian clock, an internal time-keeping system, regulates various physiological processes through the generation of approximately 24 hour circadian rhythms in gene expression, which are translated into rhythms in metabolism and behavior. It is derived from the Latin roots 'circa' (about) and 'diem' (day) and acts as an important regulator of a wide array of physiological functions including metabolism, sleep, body temperature, blood pressure, endocrine, immune, cardiovascular, and renal function. Consists of two major components: the central clock, residing in the suprachiasmatic nucleus (SCN) of the brain, and the peripheral clocks that are present in nearly every tissue and organ system. Both the central and peripheral clocks can be reset by environmental cues, also known as Zeitgebers (German for 'timegivers'). The predominant Zeitgeber for the central clock is light, which is sensed by retina and signals directly to the SCN. The central clock entrains the peripheral clocks through neuronal and hormonal signals, body temperature and feeding-related cues, aligning all clocks with the external light/dark cycle. Circadian rhythms allow an organism to achieve temporal homeostasis with its environment at the molecular level by regulating gene expression to create a peak of protein expression once every 24 hours to control when a particular physiological process is most active with respect to the solar day. Transcription and translation of core clock components (CLOCK, NPAS2, BMAL1, BMAL2, PER1, PER2, PER3, CRY1 and CRY2) plays a critical role in rhythm generation, whereas delays imposed by post-translational modifications (PTMs) are important for determining the period (tau) of the rhythms (tau refers to the period of a rhythm and is the length, in time, of one complete cycle). A diurnal rhythm is synchronized with the day/night cycle, while the ultradian and infradian rhythms have a period shorter and longer than 24 hours, respectively. Disruptions in the circadian rhythms contribute to the pathology of cardiovascular diseases, cancer, metabolic syndrome and aging. A transcription/translation feedback loop (TTFL) forms the core of the molecular circadian clock mechanism. Transcription factors, CLOCK or NPAS2 and BMAL1 or BMAL2, form the positive limb of the feedback loop, act in the form of a heterodimer and activate the transcription of core clock genes and clock-controlled genes (involved in key metabolic processes), harboring E-box elements (5'-CACGTG-3') within their promoters. The core clock genes: PER1/2/3 and CRY1/2 which are transcriptional repressors form the negative limb of the feedback loop and interact with the CLOCK|NPAS2-BMAL1|BMAL2 heterodimer inhibiting its activity and thereby negatively regulating their own expression. This heterodimer also activates nuclear receptors NR1D1/2 and RORA/B/G, which form a second feedback loop and which activate and repress BMAL1 transcription, respectively. PER1 and PER2 proteins transport CRY1 and CRY2 into the nucleus with appropriate circadian timing, but also contribute directly to repression of clock-controlled target genes through interaction with several classes of RNA-binding proteins, helicases and others transcriptional repressors. PER appears to regulate circadian control of transcription by at least three different modes. First, interacts directly with the CLOCK-BMAL1 at the tail end of the nascent transcript peak to recruit complexes containing the SIN3-HDAC that remodel chromatin to repress transcription. Second, brings H3K9 methyltransferases such as SUV39H1 and SUV39H2 to the E-box elements of the circadian target genes, like PER2 itself or PER1. The recruitment of each repressive modifier to the DNA seems to be very precisely temporally orchestrated by the large PER complex, the deacetylases acting before than the methyltransferases. Additionally, large PER complexes are also recruited to the target genes 3' termination site through interactions with RNA-binding proteins and helicases that may play a role in transcription termination to regulate transcription independently of CLOCK-BMAL1 interactions. Recruitment of large PER complexes to the elongating polymerase at PER and CRY termination sites inhibited SETX action, impeding RNA polymerase II release and thereby repressing transcriptional reinitiation. May propagate clock information to metabolic pathways via the interaction with nuclear receptors. Coactivator of PPARA and corepressor of NR1D1, binds rhythmically at the promoter of nuclear receptors target genes like BMAL1 or G6PC1. Directly and specifically represses PPARG proadipogenic activity by blocking PPARG recruitment to target promoters and thereby transcriptional activation. Required for fatty acid and lipid metabolism, is involved as well in the regulation of circulating insulin levels. Plays an important role in the maintenance of cardiovascular functions through the regulation of NO and vasodilatatory prostaglandins production in aortas. Controls circadian glutamate uptake in synaptic vesicles through the regulation of VGLUT1 expression. May also be involved in the regulation of inflammatory processes. Represses the CLOCK-BMAL1 induced transcription of BHLHE40/DEC1 and ATF4. Negatively regulates the formation of the TIMELESS-CRY1 complex by competing with TIMELESS for binding to CRY1. The sequence is that of Period circadian protein homolog 2 from Rattus norvegicus (Rat).